Reading from the N-terminus, the 208-residue chain is Ribosomal RNA small subunit methyltransferase G (208 aa).

S-adenosyl-L-methionine is bound by residues glycine 76, leucine 81, 127–128 (VE), and arginine 142.

This sequence belongs to the methyltransferase superfamily. RNA methyltransferase RsmG family.

Its subcellular location is the cytoplasm. It carries out the reaction guanosine(527) in 16S rRNA + S-adenosyl-L-methionine = N(7)-methylguanosine(527) in 16S rRNA + S-adenosyl-L-homocysteine. In terms of biological role, specifically methylates the N7 position of guanine in position 527 of 16S rRNA. This is Ribosomal RNA small subunit methyltransferase G from Legionella pneumophila subsp. pneumophila (strain Philadelphia 1 / ATCC 33152 / DSM 7513).